A 170-amino-acid chain; its full sequence is Cathelicidin antimicrobial peptide (170 aa).

An N-terminal signal peptide occupies residues 1–30; the sequence is MKTQRDGPSLGRWSLLLLLLGLTMPLAVIG. Positions 31 to 131 are cleaved as a propeptide — cathelin-like domain (CLD); that stretch reads RVLSYQEAVL…DISCDKDKRK (101 aa). Residues 31–131 form a cathelin-like domain (CLD) region; the sequence is RVLSYQEAVL…DISCDKDKRK (101 aa). 2 cysteine pairs are disulfide-bonded: Cys-86–Cys-97 and Cys-108–Cys-125. The interval 150-162 is active core; it reads LKKIGQKIKDFFG.

This sequence belongs to the cathelicidin family. As to quaternary structure, monomer, homodimer or homotrimer (in vitro). Oligomerizes as tetra- or hexamer in solution (in vitro). Post-translationally, proteolytically cleaved by proteinase PRTN3 into antibacterial peptide LL-37. Proteolytically cleaved by cathepsin CTSG and neutrophil elastase ELANE. In terms of processing, resistant to proteolytic degradation in solution, and when bound to both zwitterionic (mimicking mammalian membranes) and negatively charged membranes (mimicking bacterial membranes). After secretion onto the skin surface, the CAMP gene product is processed by a serine protease-dependent mechanism into multiple novel antimicrobial peptides distinct from and shorter than cathelicidin LL-37. These peptides show enhanced antimicrobial action, acquiring the ability to kill skin pathogens such as S.aureus, E.coli and C.albicans. These peptides have lost the ability to stimulate CXCL8/IL8 release from keratinocytes. The peptides act synergistically, killing bacteria at lower concentrations when present together, and maintain activity at increased salt condition.

Its subcellular location is the secreted. The protein localises to the vesicle. Its function is as follows. Antimicrobial protein that is an integral component of the innate immune system. Binds to bacterial lipopolysaccharides (LPS). Acts via neutrophil N-formyl peptide receptors to enhance the release of CXCL2. Postsecretory processing generates multiple cathelicidin antimicrobial peptides with various lengths which act as a topical antimicrobial defense in sweat on skin. The unprocessed precursor form, cathelicidin antimicrobial peptide, inhibits the growth of Gram-negative E.coli and E.aerogenes with efficiencies comparable to that of the mature peptide LL-37 (in vitro). In terms of biological role, antimicrobial peptide that is an integral component of the innate immune system. Binds to bacterial lipopolysaccharides (LPS). Causes membrane permeabilization by forming transmembrane pores (in vitro). Causes lysis of E.coli. Exhibits antimicrobial activity against Gram-negative bacteria such as P.aeruginosa, S.typhimurium, E.aerogenes, E.coli and P.syringae, Gram-positive bacteria such as L.monocytogenes, S.epidermidis, S.pyogenes and S.aureus, as well as vancomycin-resistant enterococci (in vitro). Exhibits antimicrobial activity against methicillin-resistant S.aureus, P.mirabilis, and C.albicans in low-salt media, but not in media containing 100 mM NaCl (in vitro). Forms chiral supramolecular assemblies with quinolone signal (PQS) molecules of P.aeruginosa, which may lead to interference of bacterial quorum signaling and perturbance of bacterial biofilm formation. May form supramolecular fiber-like assemblies on bacterial membranes. Induces cytokine and chemokine producation as well as TNF/TNFA and CSF2/GMCSF production in normal human keratinocytes. Exhibits hemolytic activity against red blood cells. Functionally, exhibits antimicrobial activity against E.coli and B.megaterium (in vitro). The polypeptide is Cathelicidin antimicrobial peptide (Saguinus oedipus (Cotton-top tamarin)).